Consider the following 187-residue polypeptide: Cytochrome b-245 chaperone 1 (187 aa).

A helical transmembrane segment spans residues 20–42; sequence GIRSWSLLVGILSIGLAAAYYSG. Serine 168 bears the Phosphoserine mark.

It belongs to the CYBC1 family. As to quaternary structure, interacts with CYBB; CYBC1 may act as a chaperone stabilizing Cytochrome b-245 heterodimer. Highly expressed in macrophages, neutrophils and monocytes.

Its subcellular location is the endoplasmic reticulum membrane. Functions as a chaperone necessary for a stable expression of the CYBA and CYBB subunits of the cytochrome b-245 heterodimer. Controls the phagocyte respiratory burst and is essential for innate immunity. The polypeptide is Cytochrome b-245 chaperone 1 (Homo sapiens (Human)).